The chain runs to 383 residues: Acetylornithine deacetylase (383 aa).

H80 contacts Zn(2+). Residue D82 is part of the active site. D112 provides a ligand contact to Zn(2+). E144 is a catalytic residue. Zn(2+) contacts are provided by E145, E169, and H355.

This sequence belongs to the peptidase M20A family. ArgE subfamily. Homodimer. Requires Zn(2+) as cofactor. The cofactor is Co(2+). It depends on glutathione as a cofactor.

The protein resides in the cytoplasm. The catalysed reaction is N(2)-acetyl-L-ornithine + H2O = L-ornithine + acetate. It participates in amino-acid biosynthesis; L-arginine biosynthesis; L-ornithine from N(2)-acetyl-L-ornithine (linear): step 1/1. Its function is as follows. Catalyzes the hydrolysis of the amide bond of N(2)-acetylated L-amino acids. Cleaves the acetyl group from N-acetyl-L-ornithine to form L-ornithine, an intermediate in L-arginine biosynthesis pathway, and a branchpoint in the synthesis of polyamines. The polypeptide is Acetylornithine deacetylase (Shigella sonnei (strain Ss046)).